We begin with the raw amino-acid sequence, 307 residues long: Ribonuclease Z (307 aa).

Zn(2+) is bound by residues histidine 63, histidine 65, aspartate 67, histidine 68, histidine 140, aspartate 211, and histidine 269. The Proton acceptor role is filled by aspartate 67.

Belongs to the RNase Z family. Homodimer. Requires Zn(2+) as cofactor.

It carries out the reaction Endonucleolytic cleavage of RNA, removing extra 3' nucleotides from tRNA precursor, generating 3' termini of tRNAs. A 3'-hydroxy group is left at the tRNA terminus and a 5'-phosphoryl group is left at the trailer molecule.. Zinc phosphodiesterase, which displays some tRNA 3'-processing endonuclease activity. Probably involved in tRNA maturation, by removing a 3'-trailer from precursor tRNA. The sequence is that of Ribonuclease Z from Geobacillus kaustophilus (strain HTA426).